We begin with the raw amino-acid sequence, 189 residues long: Peptidyl-tRNA hydrolase (189 aa).

Tyr15 serves as a coordination point for tRNA. Catalysis depends on His20, which acts as the Proton acceptor. Positions 66, 68, and 114 each coordinate tRNA.

The protein belongs to the PTH family. As to quaternary structure, monomer.

It is found in the cytoplasm. It catalyses the reaction an N-acyl-L-alpha-aminoacyl-tRNA + H2O = an N-acyl-L-amino acid + a tRNA + H(+). Hydrolyzes ribosome-free peptidyl-tRNAs (with 1 or more amino acids incorporated), which drop off the ribosome during protein synthesis, or as a result of ribosome stalling. Functionally, catalyzes the release of premature peptidyl moieties from peptidyl-tRNA molecules trapped in stalled 50S ribosomal subunits, and thus maintains levels of free tRNAs and 50S ribosomes. This Streptococcus suis (strain 98HAH33) protein is Peptidyl-tRNA hydrolase.